Consider the following 668-residue polypeptide: Fructose-1,6-bisphosphatase class 3 (668 aa).

Belongs to the FBPase class 3 family. Mn(2+) is required as a cofactor.

It catalyses the reaction beta-D-fructose 1,6-bisphosphate + H2O = beta-D-fructose 6-phosphate + phosphate. The protein operates within carbohydrate biosynthesis; gluconeogenesis. The chain is Fructose-1,6-bisphosphatase class 3 from Clostridium botulinum (strain Okra / Type B1).